The chain runs to 464 residues: Sulfoacetaldehyde dehydrogenase (acylating) (464 aa).

Residue Cys241 is the Nucleophile of the active site.

Belongs to the aldehyde dehydrogenase family.

The catalysed reaction is sulfoacetaldehyde + NADP(+) + CoA = sulfoacetyl-CoA + NADPH + H(+). Functionally, involved in the degradation of sulfoacetate. Catalyzes the conversion of sulfoacetyl-CoA and NADPH to sulfoacetaldehyde, CoA and NADP(+). A much lower level of activity (1%) is observed when NADP(+) is replaced with NAD(+). The protein is Sulfoacetaldehyde dehydrogenase (acylating) of Bilophila wadsworthia (strain 3_1_6).